Here is a 952-residue protein sequence, read N- to C-terminus: Calsyntenin-1 (952 aa).

Positions 1-28 are cleaved as a signal peptide; that stretch reads MLRRPAPALARAVRLLLAGLLYGGGVWA. The Extracellular portion of the chain corresponds to 29–830; it reads ARVNKHKPWL…PHPFAVVPST (802 aa). 2 Cadherin domains span residues 38 to 154 and 155 to 255; these read LEPT…APVF and KEKS…SPGW. A glycan (N-linked (GlcNAc...) asparagine) is linked at N356. Residues 831-851 traverse the membrane as a helical segment; the sequence is ATVVIVVCVSFLVFMIILGVF. Topologically, residues 852–952 are cytoplasmic; it reads RIRAAHQRTM…LEWDYSTLSY (101 aa). The disordered stretch occupies residues 886-952; that stretch reads METYEDQHSS…LEWDYSTLSY (67 aa). A compositionally biased stretch (acidic residues) spans 896-930; that stretch reads EEEEEEEEEEESEDGEEEEDITSAESESSEEEEGG. Residues 934 to 952 show a composition bias toward polar residues; the sequence is GQNTTRQQQLEWDYSTLSY.

This sequence belongs to the calsyntenin family. In terms of assembly, directly interacts with APBA2. Forms a tripartite complex with APBA2 and APP. Interacts with KLC1. Interacts with APBB1; this interaction stabilizes AlcICD metabolism. As to quaternary structure, interacts with PSEN1. Proteolytically processed under normal cellular conditions. A primary zeta-cleavage generates a large extracellular (soluble) N-terminal domain (sAlc) and a short C-terminal transmembrane fragment (CTF1). A secondary cleavage catalyzed by presenilin gamma-secretase within the transmembrane domain releases the beta-Alc-alpha chain in the extracellular milieu and produces an intracellular fragment (AlcICD). This processing is strongly suppressed in the tripartite complex formed with APBA2 and APP, which seems to prevent the association with PSEN1. As to expression, preferentially expressed in the retina and brain.

The protein localises to the postsynaptic cell membrane. Its subcellular location is the endoplasmic reticulum membrane. The protein resides in the golgi apparatus membrane. It is found in the cell projection. It localises to the neuron projection. The protein localises to the nucleus. Its function is as follows. Postsynaptic adhesion molecule that binds to presynaptic neurexins to mediate both excitatory and inhibitory synapse formation. Promotes synapse development by acting as a cell adhesion molecule at the postsynaptic membrane, which associates with neurexin-alpha at the presynaptic membrane. Also functions as a cargo in axonal anterograde transport by acting as a molecular adapter that promotes KLC1 association with vesicles. Complex formation with APBA2 and APP, stabilizes APP metabolism and enhances APBA2-mediated suppression of beta-APP40 secretion, due to the retardation of intracellular APP maturation. Functionally, as intracellular fragment AlcICD, suppresses APBB1-dependent transactivation stimulated by APP C-terminal intracellular fragment (AICD), most probably by competing with AICD for APBB1-binding. In terms of biological role, in complex with APBA2 and C99, a C-terminal APP fragment, abolishes C99 interaction with PSEN1 and thus APP C99 cleavage by gamma-secretase, most probably through stabilization of the direct interaction between APBA2 and APP. The sequence is that of Calsyntenin-1 (Clstn1) from Rattus norvegicus (Rat).